The sequence spans 278 residues: Urease accessory protein UreD 3 (278 aa).

It belongs to the UreD family. As to quaternary structure, ureD, UreF and UreG form a complex that acts as a GTP-hydrolysis-dependent molecular chaperone, activating the urease apoprotein by helping to assemble the nickel containing metallocenter of UreC. The UreE protein probably delivers the nickel.

It is found in the cytoplasm. Its function is as follows. Required for maturation of urease via the functional incorporation of the urease nickel metallocenter. This chain is Urease accessory protein UreD 3, found in Bradyrhizobium sp. (strain BTAi1 / ATCC BAA-1182).